A 226-amino-acid chain; its full sequence is Tyramine N-feruloyltransferase 10/30 (226 aa).

The tract at residues 29–45 (HIYKLFYQIHEYHNYTH) is important in binding site and for catalytic activity. The N-acetyltransferase domain maps to 72 to 222 (VLLLEVSPTP…VGDALQKYAD (151 aa)).

It belongs to the acetyltransferase family. In terms of assembly, homodimer.

The protein resides in the cytoplasm. It carries out the reaction tyramine + (E)-feruloyl-CoA = N-[(E)-feruloyl]tyramine + CoA + H(+). With respect to regulation, inhibited by (2-hydroxyphenyl)amino sulfinyl acetic acid 1,1-dimethylethyl ester, by DEPC and by N-ethylmaleimide. In terms of biological role, synthesizes amides which are involved in stress response in the cell wall. Catalyzes the synthesis of hydroxycinnamic acid amides from hydroxycinnamoyl-CoA thioesters and various hydroxyphenylethylamines such as 4-coumaroyl-CoA and sinapoyl-CoA. This Nicotiana tabacum (Common tobacco) protein is Tyramine N-feruloyltransferase 10/30 (THT10).